An 856-amino-acid polypeptide reads, in one-letter code: Cyclic di-GMP phosphodiesterase PdeB (856 aa).

2 consecutive transmembrane segments (helical) span residues 7 to 27 (ILVF…YCLG) and 230 to 250 (WVSL…YVWL). Residues 303–350 (QKERGKITLESIAEAVILTDIEAKVIYMNPKAETLLEVASSNAVGESL) enclose the PAS domain. One can recognise a GGDEF domain in the interval 454–587 (RSLAVCYLDL…GTNQIHIYDD (134 aa)). Residues 598–852 (APKWAVRIAQ…SYCEQFETRL (255 aa)) enclose the EAL domain.

The protein resides in the cell membrane. The enzyme catalyses 3',3'-c-di-GMP + H2O = 5'-phosphoguanylyl(3'-&gt;5')guanosine + H(+). Affects motility and biofilm formation, and is linked to the regulation of sulfate uptake and assimilation. The polypeptide is Cyclic di-GMP phosphodiesterase PdeB (pdeB) (Shewanella oneidensis (strain ATCC 700550 / JCM 31522 / CIP 106686 / LMG 19005 / NCIMB 14063 / MR-1)).